The following is a 169-amino-acid chain: E1B protein, small T-antigen (169 aa).

It belongs to the adenoviridae E1B 19 kDa protein family.

In Canis lupus familiaris (Dog), this protein is E1B protein, small T-antigen.